Consider the following 237-residue polypeptide: MNRLSVPRFSVLIASLCGITLLSGCVAPTAKPNDPYYAPVLPRTPMSAAANNGAIYQAGFEQNLYGDRKAFRIGDIITITLSERMAASKAATSAMSKDSTNSIGLTSLFGSGLTTNNPIGGNDLSLNAGYNGARTTKGDGKAAQSNSLTGSVTVTVADVLPNGILAVRGEKWMTLNTGDELVRIAGLVRADDIATDNTVSSTRIADARITYSGTGAFADTSQPGWFDRFFLSPLFPF.

The first 24 residues, 1–24, serve as a signal peptide directing secretion; the sequence is MNRLSVPRFSVLIASLCGITLLSG. A lipid anchor (N-palmitoyl cysteine) is attached at cysteine 25. Cysteine 25 carries S-diacylglycerol cysteine lipidation.

It belongs to the FlgH family. As to quaternary structure, the basal body constitutes a major portion of the flagellar organelle and consists of four rings (L,P,S, and M) mounted on a central rod.

It is found in the cell outer membrane. The protein resides in the bacterial flagellum basal body. Functionally, assembles around the rod to form the L-ring and probably protects the motor/basal body from shearing forces during rotation. This Pseudomonas syringae pv. syringae (strain B728a) protein is Flagellar L-ring protein.